The primary structure comprises 502 residues: Glutamate--tRNA ligase (502 aa).

A 'HIGH' region motif is present at residues 9 to 19 (PSPTGFPHVGT). Positions 250 to 254 (KLSKR) match the 'KMSKS' region motif. Lys-253 is an ATP binding site.

This sequence belongs to the class-I aminoacyl-tRNA synthetase family. Glutamate--tRNA ligase type 1 subfamily. Monomer.

It localises to the cytoplasm. It catalyses the reaction tRNA(Glu) + L-glutamate + ATP = L-glutamyl-tRNA(Glu) + AMP + diphosphate. Functionally, catalyzes the attachment of glutamate to tRNA(Glu) in a two-step reaction: glutamate is first activated by ATP to form Glu-AMP and then transferred to the acceptor end of tRNA(Glu). This chain is Glutamate--tRNA ligase, found in Acinetobacter baumannii (strain SDF).